The primary structure comprises 34 residues: Photosystem II reaction center protein M (34 aa).

Residues G7–I27 traverse the membrane as a helical segment.

Belongs to the PsbM family. As to quaternary structure, PSII is composed of 1 copy each of membrane proteins PsbA, PsbB, PsbC, PsbD, PsbE, PsbF, PsbH, PsbI, PsbJ, PsbK, PsbL, PsbM, PsbT, PsbX, PsbY, Psb30/Ycf12, peripheral proteins PsbO, CyanoQ (PsbQ), PsbU, PsbV and a large number of cofactors. It forms dimeric complexes.

Its subcellular location is the cellular thylakoid membrane. One of the components of the core complex of photosystem II (PSII). PSII is a light-driven water:plastoquinone oxidoreductase that uses light energy to abstract electrons from H(2)O, generating O(2) and a proton gradient subsequently used for ATP formation. It consists of a core antenna complex that captures photons, and an electron transfer chain that converts photonic excitation into a charge separation. This subunit is found at the monomer-monomer interface. The polypeptide is Photosystem II reaction center protein M (Prochlorococcus marinus (strain MIT 9303)).